The chain runs to 564 residues: Dihydroxy-acid dehydratase (564 aa).

Cysteine 55 lines the [2Fe-2S] cluster pocket. Aspartate 87 serves as a coordination point for Mg(2+). Cysteine 128 lines the [2Fe-2S] cluster pocket. Residues aspartate 129 and lysine 130 each coordinate Mg(2+). Lysine 130 bears the N6-carboxylysine mark. A [2Fe-2S] cluster-binding site is contributed by cysteine 200. Glutamate 452 provides a ligand contact to Mg(2+). The active-site Proton acceptor is serine 478.

The protein belongs to the IlvD/Edd family. As to quaternary structure, homodimer. Requires [2Fe-2S] cluster as cofactor. It depends on Mg(2+) as a cofactor.

It carries out the reaction (2R)-2,3-dihydroxy-3-methylbutanoate = 3-methyl-2-oxobutanoate + H2O. The enzyme catalyses (2R,3R)-2,3-dihydroxy-3-methylpentanoate = (S)-3-methyl-2-oxopentanoate + H2O. It participates in amino-acid biosynthesis; L-isoleucine biosynthesis; L-isoleucine from 2-oxobutanoate: step 3/4. It functions in the pathway amino-acid biosynthesis; L-valine biosynthesis; L-valine from pyruvate: step 3/4. Functionally, functions in the biosynthesis of branched-chain amino acids. Catalyzes the dehydration of (2R,3R)-2,3-dihydroxy-3-methylpentanoate (2,3-dihydroxy-3-methylvalerate) into 2-oxo-3-methylpentanoate (2-oxo-3-methylvalerate) and of (2R)-2,3-dihydroxy-3-methylbutanoate (2,3-dihydroxyisovalerate) into 2-oxo-3-methylbutanoate (2-oxoisovalerate), the penultimate precursor to L-isoleucine and L-valine, respectively. The sequence is that of Dihydroxy-acid dehydratase from Polaromonas sp. (strain JS666 / ATCC BAA-500).